A 316-amino-acid chain; its full sequence is Type II restriction enzyme BsuBI (316 aa).

The protein belongs to the BsuBI/PstI type II restriction endonuclease family. As to quaternary structure, homodimer. Requires Mg(2+) as cofactor.

It catalyses the reaction Endonucleolytic cleavage of DNA to give specific double-stranded fragments with terminal 5'-phosphates.. Functionally, a P subtype restriction enzyme that recognizes the double-stranded sequence 5'-CTGCAG-3' and cleaves after A-5. This chain is Type II restriction enzyme BsuBI (hsdBR), found in Bacillus subtilis.